The sequence spans 1151 residues: UDP-N-acetylglucosamine--peptide N-acetylglucosaminyltransferase (1151 aa).

TPR repeat units lie at residues 125–158 (LKKV…DPNN), 193–226 (AEAY…KPEF), 227–260 (IDAY…NPDL), 261–294 (YCVR…QPQF), 295–328 (AVAW…DPNF), 329–362 (LDAY…SGNH), 363–396 (AVVH…QPHF), 397–430 (PDAY…CPTH), 431–464 (ADSQ…YPEF), 465–498 (AAAH…APTF), 499–532 (ADAY…NPAF), and 533–566 (ADAH…KPDF). The stretch at 567–577 (PDAYCNLAHCH) is one TPR 13; truncated repeat. Residues 591–607 (RKLVQIVEDQLCKKRLP) carry the Nuclear localization signal motif. His-612 acts as the Proton acceptor in catalysis. UDP is bound by residues Gln-954, Lys-957, 1010–1013 (VAAK), 1016–1019 (HVRR), 1034–1036 (GHT), and Asp-1040.

The protein belongs to the glycosyltransferase 41 family. O-GlcNAc transferase subfamily.

The protein localises to the nucleus. It localises to the cytoplasm. The protein resides in the perinuclear region. It carries out the reaction L-seryl-[protein] + UDP-N-acetyl-alpha-D-glucosamine = 3-O-(N-acetyl-beta-D-glucosaminyl)-L-seryl-[protein] + UDP + H(+). The catalysed reaction is L-threonyl-[protein] + UDP-N-acetyl-alpha-D-glucosamine = 3-O-(N-acetyl-beta-D-glucosaminyl)-L-threonyl-[protein] + UDP + H(+). The protein operates within protein modification; protein glycosylation. Addition of nucleotide-activated sugars directly onto the polypeptide through O-glycosidic linkage with the hydroxyl of serine or threonine. Influences tap habituation in the mechanosensory neurons cell autonomously. This Caenorhabditis elegans protein is UDP-N-acetylglucosamine--peptide N-acetylglucosaminyltransferase (ogt-1).